Here is a 198-residue protein sequence, read N- to C-terminus: Recombination protein RecR (198 aa).

The C4-type zinc-finger motif lies at 57–72 (CSECGHITEQDPCYIC). Positions 80–175 (SVICVVEDDK…TVTRLAQGLS (96 aa)) constitute a Toprim domain.

This sequence belongs to the RecR family.

Functionally, may play a role in DNA repair. It seems to be involved in an RecBC-independent recombinational process of DNA repair. It may act with RecF and RecO. The protein is Recombination protein RecR of Staphylococcus saprophyticus subsp. saprophyticus (strain ATCC 15305 / DSM 20229 / NCIMB 8711 / NCTC 7292 / S-41).